A 277-amino-acid chain; its full sequence is tRNA pseudouridine synthase A (277 aa).

D51 acts as the Nucleophile in catalysis. Y109 is a binding site for substrate.

Belongs to the tRNA pseudouridine synthase TruA family. In terms of assembly, homodimer.

It carries out the reaction uridine(38/39/40) in tRNA = pseudouridine(38/39/40) in tRNA. In terms of biological role, formation of pseudouridine at positions 38, 39 and 40 in the anticodon stem and loop of transfer RNAs. This is tRNA pseudouridine synthase A from Nitrosomonas eutropha (strain DSM 101675 / C91 / Nm57).